The sequence spans 427 residues: Glutamyl-tRNA reductase (427 aa).

Substrate contacts are provided by residues 50 to 53 (TCNR), serine 110, 115 to 117 (ETQ), and glutamine 121. The active-site Nucleophile is the cysteine 51. An NADP(+)-binding site is contributed by 190–195 (GAGEMG).

Belongs to the glutamyl-tRNA reductase family. Homodimer.

The catalysed reaction is (S)-4-amino-5-oxopentanoate + tRNA(Glu) + NADP(+) = L-glutamyl-tRNA(Glu) + NADPH + H(+). It participates in porphyrin-containing compound metabolism; protoporphyrin-IX biosynthesis; 5-aminolevulinate from L-glutamyl-tRNA(Glu): step 1/2. Its function is as follows. Catalyzes the NADPH-dependent reduction of glutamyl-tRNA(Glu) to glutamate 1-semialdehyde (GSA). The polypeptide is Glutamyl-tRNA reductase (Campylobacter concisus (strain 13826)).